The chain runs to 445 residues: Phosphoglucosamine mutase (445 aa).

S101 serves as the catalytic Phosphoserine intermediate. Mg(2+) is bound by residues S101, D240, D242, and D244. S101 carries the post-translational modification Phosphoserine.

This sequence belongs to the phosphohexose mutase family. Requires Mg(2+) as cofactor. Post-translationally, activated by phosphorylation.

It carries out the reaction alpha-D-glucosamine 1-phosphate = D-glucosamine 6-phosphate. Functionally, catalyzes the conversion of glucosamine-6-phosphate to glucosamine-1-phosphate. This chain is Phosphoglucosamine mutase, found in Pseudomonas fluorescens (strain ATCC BAA-477 / NRRL B-23932 / Pf-5).